The sequence spans 30 residues: NADH-ubiquinone oxidoreductase chain 5 (30 aa).

A helical transmembrane segment spans residues 7-27; the sequence is NIIIIINSSLIIILFSSIFFF.

It belongs to the complex I subunit 5 family.

It localises to the mitochondrion inner membrane. The enzyme catalyses a ubiquinone + NADH + 5 H(+)(in) = a ubiquinol + NAD(+) + 4 H(+)(out). In terms of biological role, core subunit of the mitochondrial membrane respiratory chain NADH dehydrogenase (Complex I) that is believed to belong to the minimal assembly required for catalysis. Complex I functions in the transfer of electrons from NADH to the respiratory chain. The immediate electron acceptor for the enzyme is believed to be ubiquinone. The polypeptide is NADH-ubiquinone oxidoreductase chain 5 (ND5) (Pisaster ochraceus (Ochre sea star)).